Consider the following 63-residue polypeptide: Large ribosomal subunit protein uL30 (63 aa).

It belongs to the universal ribosomal protein uL30 family. Part of the 50S ribosomal subunit.

The polypeptide is Large ribosomal subunit protein uL30 (Rickettsia africae (strain ESF-5)).